Here is a 145-residue protein sequence, read N- to C-terminus: MLTAEEKAAVTAFWGKVKVDEVGGEALGRLLVVYPWTQRFFESFGDLSSADAVMNNPKVKAHGKKVLDSFSNGMKHLDDLKGTFAALSELHCDKLHVDPENFKLLGNVLVVVLARHFGKEFTPVLQADFQKVVVGVANALAHRYH.

Residues 1–145 (MLTAEEKAAV…VANALAHRYH (145 aa)) form the Globin domain. Thr11 is modified (phosphothreonine). Ser43 is modified (phosphoserine). The residue at position 58 (Lys58) is an N6-acetyllysine. His62 serves as a coordination point for heme b. N6-acetyllysine is present on Lys81. Residue His91 participates in heme b binding. Residue Cys92 is modified to S-nitrosocysteine.

Belongs to the globin family. In terms of assembly, heterotetramer of two alpha chains and two beta chains. As to expression, red blood cells.

In terms of biological role, involved in oxygen transport from the lung to the various peripheral tissues. The polypeptide is Hemoglobin subunit beta (HBB) (Bos mutus grunniens (Wild yak)).